Consider the following 271-residue polypeptide: Collectin-11 (271 aa).

Positions 1–25 are cleaved as a signal peptide; that stretch reads MVGEKLVAYMLVSVLGLALLRSVFG. A Collagen-like domain is found at 44 to 103; the sequence is GEAGEKGEKGAPGRPGRVGPTGEQGPPGDKGQKGSPGRYGKMGPTGPKGLKGDMGDPGPK. The tract at residues 46-112 is disordered; that stretch reads AGEKGEKGAP…KGPNGEPGVP (67 aa). The stretch at 124 to 148 forms a coiled coil; the sequence is EMDIQVVQLTNELKFIKNAVAGIKE. In terms of domain architecture, C-type lectin spans 149–265; that stretch reads TDSKVYLLVK…CQLTMYFVCE (117 aa). 2 disulfide bridges follow: C170/C264 and C242/C256. Residue R200 participates in a carbohydrate binding. Positions 207, 211, 232, 234, 235, 238, 240, and 241 each coordinate Ca(2+). Residue E240 coordinates a carbohydrate. A carbohydrate-binding positions include E244 and 252-254; that span reads IDV. D253 contacts Ca(2+).

The protein belongs to the COLEC10/COLEC11 family. In terms of assembly, homotrimer; disulfide-linked. Interacts with MASP1; probably triggers the lectin pathway of complement.

It localises to the secreted. Its function is as follows. Lectin that plays a role in innate immunity, apoptosis and embryogenesis. Calcium-dependent lectin that binds self and non-self glycoproteins presenting high mannose oligosaccharides with at least one terminal alpha-1,2-linked mannose epitope. Primarily recognizes the terminal disaccharide of the glycan. Also recognizes a subset of fucosylated glycans and lipopolysaccharides. Plays a role in innate immunity through its ability to bind non-self sugars presented by microorganisms and to activate the complement through the recruitment of MAPS1. Also plays a role in apoptosis through its ability to bind in a calcium-independent manner the DNA present at the surface of apoptotic cells and to activate the complement in response to this binding. Finally, plays a role in development, probably serving as a guidance cue during the migration of neural crest cells and other cell types during embryogenesis. This Danio rerio (Zebrafish) protein is Collectin-11 (colec11).